An 85-amino-acid chain; its full sequence is Putative defensin-like protein 258 (85 aa).

The signal sequence occupies residues 1 to 25 (MINVSLKRSLLIFISVITSNIGSEA). Intrachain disulfides connect Cys-57–Cys-75, Cys-63–Cys-82, and Cys-67–Cys-84.

The protein belongs to the DEFL family.

It is found in the secreted. The protein is Putative defensin-like protein 258 of Arabidopsis thaliana (Mouse-ear cress).